The sequence spans 590 residues: Aspartate--tRNA(Asp/Asn) ligase (590 aa).

Residue Glu-175 participates in L-aspartate binding. The interval 199-202 (QQYK) is aspartate. The L-aspartate site is built by Arg-221 and His-450. 221 to 223 (RDE) is a binding site for ATP. Glu-484 contributes to the ATP binding site. Residue Arg-491 participates in L-aspartate binding. 536 to 539 (GVDR) is a binding site for ATP.

It belongs to the class-II aminoacyl-tRNA synthetase family. Type 1 subfamily. Homodimer.

It localises to the cytoplasm. The enzyme catalyses tRNA(Asx) + L-aspartate + ATP = L-aspartyl-tRNA(Asx) + AMP + diphosphate. Aspartyl-tRNA synthetase with relaxed tRNA specificity since it is able to aspartylate not only its cognate tRNA(Asp) but also tRNA(Asn). Reaction proceeds in two steps: L-aspartate is first activated by ATP to form Asp-AMP and then transferred to the acceptor end of tRNA(Asp/Asn). This is Aspartate--tRNA(Asp/Asn) ligase from Nitrobacter winogradskyi (strain ATCC 25391 / DSM 10237 / CIP 104748 / NCIMB 11846 / Nb-255).